The following is a 261-amino-acid chain: 3-methyl-2-oxobutanoate hydroxymethyltransferase (261 aa).

Mg(2+)-binding residues include Asp-42 and Asp-81. Residues 42–43, Asp-81, and Lys-110 contribute to the 3-methyl-2-oxobutanoate site; that span reads DS. Residue Glu-112 coordinates Mg(2+). Glu-179 acts as the Proton acceptor in catalysis.

This sequence belongs to the PanB family. In terms of assembly, homodecamer; pentamer of dimers. It depends on Mg(2+) as a cofactor.

It is found in the cytoplasm. The catalysed reaction is 3-methyl-2-oxobutanoate + (6R)-5,10-methylene-5,6,7,8-tetrahydrofolate + H2O = 2-dehydropantoate + (6S)-5,6,7,8-tetrahydrofolate. It participates in cofactor biosynthesis; coenzyme A biosynthesis. Its function is as follows. Catalyzes the reversible reaction in which hydroxymethyl group from 5,10-methylenetetrahydrofolate is transferred onto alpha-ketoisovalerate to form ketopantoate. This chain is 3-methyl-2-oxobutanoate hydroxymethyltransferase, found in Pyrobaculum neutrophilum (strain DSM 2338 / JCM 9278 / NBRC 100436 / V24Sta) (Thermoproteus neutrophilus).